The sequence spans 413 residues: THAP domain-containing protein 5 (413 aa).

The THAP-type zinc finger occupies 1–85 (MPRYCAASYC…LKHTAVPTIF (85 aa)). The segment at 84–118 (IFSSPDDEEKGSSQNSPQEIRREDQEETTKNVESK) is disordered. Residues 102–118 (EIRREDQEETTKNVESK) show a composition bias toward basic and acidic residues. A coiled-coil region spans residues 375 to 399 (RLRSLEALIGQLKQENLLSEEKLKI).

It localises to the nucleus. This is THAP domain-containing protein 5 (THAP5) from Gallus gallus (Chicken).